The following is a 582-amino-acid chain: MVLFNVSRVETTPFGDQKPGTSGLRKKVKVFKQPNYLQNFVQSTFNALTPQNVRGATLVVSGDGRYFSKDAIQIITKMAAGNGLRRVWVGQNGLLSTPAVSAVIRERVGVDGSKATGAFILTASHNPGGPNEDFGIKYNMENGGPAPEGITDKIYENTKTIKEYLTADLPDVDITTIGVTSFSGSEGQFDVEVFDSASDYIKLMKSIFDFESIRKLLSSPKFTFCYDALHGVAGAYAKRIFVEELGAQESSLLNCVPKEDFGGGHPDPNLTYAKELVARMGLGKSNSEVEPPEFGAAADGDADRNMVLGKRFFVTPSDSVAIIAANAVEAIPYFSAGLKGVARSMPTSAALDVVAKSLNLKFFEVPTGWKFFGNLMDAGLCSVCGEESFGTGSDHIREKDGIWAVLAWLSILAYKNRENLGGGKLVTVEDIVHNHWATYGRHYYTRYDYENVDAGAAKELMACLVKLQSSLTEVNEIVSGIQSDVSKVVHADEFEYKDPVDGSISKHQGIRYLFEDGSRLVFRLSGTGSEGATIRLYIEQYEKDPSKTGRDSQDALAPLVAVALGLXKMQEFTGRSAPTVIT.

Alpha-D-glucose 1,6-bisphosphate contacts are provided by arginine 25 and serine 124. Catalysis depends on serine 124, which acts as the Phosphoserine intermediate. Mg(2+) contacts are provided by serine 124, aspartate 299, aspartate 301, and aspartate 303. Serine 124 bears the Phosphoserine mark. Alpha-D-glucose 1,6-bisphosphate-binding residues include aspartate 303, arginine 304, threonine 367, glutamate 386, serine 388, and lysine 399.

The protein belongs to the phosphohexose mutase family. As to quaternary structure, monomer. The cofactor is Mg(2+).

The protein resides in the cytoplasm. It carries out the reaction alpha-D-glucose 1-phosphate = alpha-D-glucose 6-phosphate. The catalysed reaction is O-phospho-L-seryl-[protein] + alpha-D-glucose 1-phosphate = alpha-D-glucose 1,6-bisphosphate + L-seryl-[protein]. It catalyses the reaction alpha-D-glucose 1,6-bisphosphate + L-seryl-[protein] = O-phospho-L-seryl-[protein] + alpha-D-glucose 6-phosphate. Functionally, catalyzes the reversible isomerization of alpha-D-glucose 1-phosphate to alpha-D-glucose 6-phosphate. The mechanism proceeds via the intermediate compound alpha-D-glucose 1,6-bisphosphate. This enzyme participates in both the breakdown and synthesis of glucose. In Populus tremula (European aspen), this protein is Phosphoglucomutase, cytoplasmic (PGM1).